A 70-amino-acid polypeptide reads, in one-letter code: Movement protein TGBp3 (70 aa).

At 1-4 the chain is on the lumenal side; it reads MEVN. The chain crosses the membrane as a helical span at residues 5–27; sequence TYLNAIILVLVVTIIAVISTSLV. Topologically, residues 28-70 are cytoplasmic; that stretch reads RTEPCVIKITGESITVLACKLDAETIKAIADLKPLSVERLSFH.

The protein belongs to the Tymovirales TGBp3 protein family.

It is found in the host endoplasmic reticulum membrane. In terms of biological role, plays a role in viral cell-to-cell propagation, by facilitating genome transport to neighboring plant cells through plasmosdesmata. May induce the formation of granular vesicles derived from the endoplasmic reticulum, which align on actin filaments. The chain is Movement protein TGBp3 from Brassica campestris (Field mustard).